The sequence spans 202 residues: MLDLLKISVTGDPSSGKTEACQVFEDLGAYVISADKVSHSFLVPYTSVGQRIIDLLGPEIIIENTLSRKAIAEKVFGNRDLLLSLEEILHPEVCRFVEEKYAHVVQEQKYPLFIAEFPLLYEIQYADWFDQVILISADTGIRKERFLKKTGGSDTSFDLRCARFSSLEEKILRADVVIENNGTKEEFRRKVKQCFKALKGTI.

Positions 6–202 (KISVTGDPSS…QCFKALKGTI (197 aa)) constitute a DPCK domain. Residue 14-19 (SSGKTE) coordinates ATP.

It belongs to the CoaE family.

Its subcellular location is the cytoplasm. The catalysed reaction is 3'-dephospho-CoA + ATP = ADP + CoA + H(+). Its pathway is cofactor biosynthesis; coenzyme A biosynthesis; CoA from (R)-pantothenate: step 5/5. Functionally, catalyzes the phosphorylation of the 3'-hydroxyl group of dephosphocoenzyme A to form coenzyme A. The chain is Dephospho-CoA kinase from Chlamydia trachomatis serovar D (strain ATCC VR-885 / DSM 19411 / UW-3/Cx).